Reading from the N-terminus, the 844-residue chain is Eukaryotic translation elongation factor 2 (844 aa).

One can recognise a tr-type G domain in the interval 17–348 (RNIRNMSVIA…MIAIHLPSPV (332 aa)). Position 26 to 33 (26 to 33 (AHVDHGKS)) interacts with GTP. Phosphothreonine is present on residues threonine 57 and threonine 59. GTP is bound by residues 162–165 (NKMD) and 219–221 (SGL). At histidine 701 the chain carries Diphthamide.

This sequence belongs to the TRAFAC class translation factor GTPase superfamily. Classic translation factor GTPase family. EF-G/EF-2 subfamily. Phosphorylation by EF-2 kinase completely inactivates eEF2.

It is found in the cytoplasm. The enzyme catalyses GTP + H2O = GDP + phosphate + H(+). Functionally, catalyzes the GTP-dependent ribosomal translocation step during translation elongation. During this step, the ribosome changes from the pre-translocational (PRE) to the post-translocational (POST) state as the newly formed A-site-bound peptidyl-tRNA and P-site-bound deacylated tRNA move to the P and E sites, respectively. Catalyzes the coordinated movement of the two tRNA molecules, the mRNA and conformational changes in the ribosome. In Drosophila melanogaster (Fruit fly), this protein is Eukaryotic translation elongation factor 2.